We begin with the raw amino-acid sequence, 453 residues long: Tubulin beta-2 chain (453 aa).

Residues glutamine 11, glutamate 71, serine 140, glycine 144, threonine 145, glycine 146, asparagine 206, and asparagine 228 each contribute to the GTP site. Glutamate 71 is a Mg(2+) binding site.

This sequence belongs to the tubulin family. Dimer of alpha and beta chains. A typical microtubule is a hollow water-filled tube with an outer diameter of 25 nm and an inner diameter of 15 nM. Alpha-beta heterodimers associate head-to-tail to form protofilaments running lengthwise along the microtubule wall with the beta-tubulin subunit facing the microtubule plus end conferring a structural polarity. Microtubules usually have 13 protofilaments but different protofilament numbers can be found in some organisms and specialized cells. The cofactor is Mg(2+).

The protein localises to the cytoplasm. It localises to the cytoskeleton. Tubulin is the major constituent of microtubules, a cylinder consisting of laterally associated linear protofilaments composed of alpha- and beta-tubulin heterodimers. Microtubules grow by the addition of GTP-tubulin dimers to the microtubule end, where a stabilizing cap forms. Below the cap, tubulin dimers are in GDP-bound state, owing to GTPase activity of alpha-tubulin. The sequence is that of Tubulin beta-2 chain from Geotrichum candidum (Oospora lactis).